Consider the following 143-residue polypeptide: Transcriptional regulator MraZ (143 aa).

SpoVT-AbrB domains follow at residues 5 to 47 (EYLH…PLDE) and 76 to 119 (ATEC…SQAL).

Belongs to the MraZ family. As to quaternary structure, forms oligomers.

It localises to the cytoplasm. The protein resides in the nucleoid. This is Transcriptional regulator MraZ from Desulfitobacterium hafniense (strain DSM 10664 / DCB-2).